A 488-amino-acid chain; its full sequence is Glutamyl-tRNA(Gln) amidotransferase subunit A (488 aa).

Active-site charge relay system residues include Lys-77 and Ser-152. Ser-176 functions as the Acyl-ester intermediate in the catalytic mechanism.

It belongs to the amidase family. GatA subfamily. In terms of assembly, heterotrimer of A, B and C subunits.

The enzyme catalyses L-glutamyl-tRNA(Gln) + L-glutamine + ATP + H2O = L-glutaminyl-tRNA(Gln) + L-glutamate + ADP + phosphate + H(+). Functionally, allows the formation of correctly charged Gln-tRNA(Gln) through the transamidation of misacylated Glu-tRNA(Gln) in organisms which lack glutaminyl-tRNA synthetase. The reaction takes place in the presence of glutamine and ATP through an activated gamma-phospho-Glu-tRNA(Gln). In Streptococcus pneumoniae (strain JJA), this protein is Glutamyl-tRNA(Gln) amidotransferase subunit A.